A 227-amino-acid chain; its full sequence is ATP-dependent dethiobiotin synthetase BioD (227 aa).

13–18 (DIGKTY) lines the ATP pocket. Mg(2+) is bound at residue T17. Residue K38 is part of the active site. A substrate-binding site is contributed by S42. ATP contacts are provided by residues D55, 116–119 (EGSG), and 179–180 (NN). Mg(2+)-binding residues include D55 and E116.

Belongs to the dethiobiotin synthetase family. As to quaternary structure, homodimer. Mg(2+) serves as cofactor.

The protein resides in the cytoplasm. The catalysed reaction is (7R,8S)-7,8-diammoniononanoate + CO2 + ATP = (4R,5S)-dethiobiotin + ADP + phosphate + 3 H(+). It participates in cofactor biosynthesis; biotin biosynthesis; biotin from 7,8-diaminononanoate: step 1/2. Catalyzes a mechanistically unusual reaction, the ATP-dependent insertion of CO2 between the N7 and N8 nitrogen atoms of 7,8-diaminopelargonic acid (DAPA, also called 7,8-diammoniononanoate) to form a ureido ring. In Clostridium botulinum (strain Alaska E43 / Type E3), this protein is ATP-dependent dethiobiotin synthetase BioD.